Here is a 315-residue protein sequence, read N- to C-terminus: MIRIGTRGSLLATTQAGGVRDALIARGHPAELVTITTAGDRSSGPIESLGVGVFTTALREAIEEGRVDAAVHSHKDLPTADDPRFAVAAIPARNDPRDAVVARDGLVLGELPPGSLVGTSSPRRAAQLRALGLGLEIRPLRGNLDTRLNRVSSGDLDAIVVARAGLARLGRLGDVTETLEPVQMLPAPAQGALAVECRAGDSRLAAVLAELDDADTRASVTAERALLAELEAGCSAPVGAIAEVVESIDEDGRIFEELSLRGCVAALDGSDVIRASGIGTPGRARELGLSVAAELFELGARELMSGARHDPARGN.

Cys234 carries the S-(dipyrrolylmethanemethyl)cysteine modification.

The protein belongs to the HMBS family. As to quaternary structure, monomer. Dipyrromethane serves as cofactor.

The catalysed reaction is 4 porphobilinogen + H2O = hydroxymethylbilane + 4 NH4(+). It functions in the pathway porphyrin-containing compound metabolism; protoporphyrin-IX biosynthesis; coproporphyrinogen-III from 5-aminolevulinate: step 2/4. In terms of biological role, tetrapolymerization of the monopyrrole PBG into the hydroxymethylbilane pre-uroporphyrinogen in several discrete steps. In Mycobacterium avium (strain 104), this protein is Porphobilinogen deaminase.